The primary structure comprises 514 residues: ATP synthase subunit alpha (514 aa).

An ATP-binding site is contributed by 170–177 (GDRQTGKT).

This sequence belongs to the ATPase alpha/beta chains family. In terms of assembly, F-type ATPases have 2 components, CF(1) - the catalytic core - and CF(0) - the membrane proton channel. CF(1) has five subunits: alpha(3), beta(3), gamma(1), delta(1), epsilon(1). CF(0) has three main subunits: a(1), b(2) and c(9-12). The alpha and beta chains form an alternating ring which encloses part of the gamma chain. CF(1) is attached to CF(0) by a central stalk formed by the gamma and epsilon chains, while a peripheral stalk is formed by the delta and b chains.

The protein localises to the cell inner membrane. The catalysed reaction is ATP + H2O + 4 H(+)(in) = ADP + phosphate + 5 H(+)(out). Produces ATP from ADP in the presence of a proton gradient across the membrane. The alpha chain is a regulatory subunit. The protein is ATP synthase subunit alpha of Acidithiobacillus ferridurans.